A 302-amino-acid polypeptide reads, in one-letter code: 33 kDa chaperonin (302 aa).

Disulfide bonds link cysteine 234–cysteine 236 and cysteine 267–cysteine 270.

This sequence belongs to the HSP33 family. Post-translationally, under oxidizing conditions two disulfide bonds are formed involving the reactive cysteines. Under reducing conditions zinc is bound to the reactive cysteines and the protein is inactive.

The protein localises to the cytoplasm. Its function is as follows. Redox regulated molecular chaperone. Protects both thermally unfolding and oxidatively damaged proteins from irreversible aggregation. Plays an important role in the bacterial defense system toward oxidative stress. This Neisseria gonorrhoeae (strain NCCP11945) protein is 33 kDa chaperonin.